Reading from the N-terminus, the 238-residue chain is IIGGDECNINEHRFLVALYTSRSRTLFCGGTLINQEWVLTAAHCDRKNFRIKLGMHSKKVPNEDEQTRVPKEKFFCLSSKNYTLWDKDIMLIRLDSPVKNSKHIAPFSLPSSPPSVGSVCRIMGWGRISPTEGTYPDVPHCVNINLLEYEMCRAPYPEFELPATSRTLCAGILEGGKDTCKGDSGGPLICNGQFQGIASWGDDPCAQPHKPAAYTKVFDHLDWIENIIAGNTDASCPP.

The region spanning 1 to 229 (IIGGDECNIN…HLDWIENIIA (229 aa)) is the Peptidase S1 domain. 6 disulfides stabilise this stretch: Cys7–Cys141, Cys28–Cys44, Cys76–Cys236, Cys120–Cys190, Cys152–Cys169, and Cys180–Cys205. His43 acts as the Charge relay system in catalysis. Asn81 carries an N-linked (GlcNAc...) asparagine glycan. Asp88 (charge relay system) is an active-site residue. Ser184 functions as the Charge relay system in the catalytic mechanism.

The protein belongs to the peptidase S1 family. Snake venom subfamily. As to quaternary structure, monomer. In terms of processing, N-glycosylated at Asn-81 by a disaccharide composed of two N-acetylglucosamine (NAG). The presence of this N-glycan deforms the enzyme and Removing the carbohydrate moiety increases the esterase activity, but induces a complete loss of contractile response on mouse thoracic aorta. Expressed by the venom gland.

The protein resides in the secreted. With respect to regulation, inhibited by PMSF, L-cysteine and partially by SBTI and leupeptin. Its function is as follows. Thrombin-like enzyme that shows fibrinogenolytic activity against both the Aalpha (FGA) and Bbeta (FGB) chains of bovine fibrinogen. This enzyme has poor esterolytic activity upon BAEE substrate. It induces mouse thoracic aortic ring contraction with EC(50)=147 nmol/L. It shows vasoconstrictor effects that are independent of the enzymatic activity, but related to the release of calcium ions form the calcium store, potentially through the activation of ryanodine receptors. This chain is Thrombin-like enzyme AhV_TL-I, found in Gloydius halys (Chinese water mocassin).